We begin with the raw amino-acid sequence, 1708 residues long: MAAIGRGRSLKNLRIRGRNDSGEENVPLDLTREPSDNLREILQNVAKLQGVSNMRKLGHLNNFTKLLCDIGHSEEKLGFNYEDIIICLRLALLNEAKEVRAAGLRALRYLIQDSSILQKVLKLKVDYLIARCIDIQQSNEVERTQALRLVRKMITVNASLFPSSVANSLIAVGNDGLQERDRMVRACIAIICELALQNPEVVALRGGLNTILKNVIDCQLSRINEALITTILHLLNHPKTRQYVRADVELERILAPYTDFHYRHSPDTAEGQLKEDREARFLASKMGIIATFRSWAGIINLCKPGNSGIQSLIGVLCIPNMEIRRGLLEVLYDIFRLPLPVVTDEFIEALLSVDPGRFQDSWRLSDGFVAAEAKTILPHRARSRPDLMDNYLALILSAFIRNGLLEGLVEVITNSDDHISVRATILLGELLHMANTILPHSHSHHLHCLPTLMNMAASFDIPKEKRLRASAALNCLNRFHEMKKRGPKPYSLHLDHIIQKAIATHHKRDQYLRVQKDIFVLKDTEEALLINLRDSQVLQHKENLDWDWNLIGTILKWPNVNLRNYKDEQLHRFVRRLLYFYKPSSKLYASLDLDLAKSKQLTVVGCQFTEFLLESEEDGQGYLEDLVKDIVQWLNASSGVKPERSLQNNGLLTTLSQHYFLFIGTLSCHPHGVKMLEKCSVFQCLLNLCSLKNQDHLIKLTVSSLDYSRDGLARVILSKILTAATDACRLYATKHLRVLLRANVEFFNNWGIELLVTQLHDKNKTISSEALDILDEACEDKANLHALIQMKPALSHLGDKGLLLLLRFLSIPKGFSYLNERGYVAKQLEKWHKEYNSKYVDLIEEQLNEALTTYRKPIDGDNYVRRSNQRLQRPHVYLPVHLYGQLVHHKTGCHLLEVQSIITELCHNVRTPDLDKWEDIKKLKASLWALGNIGSSNWGLNLLQEENVIPDILKLAKQCEVLSIRGTCVYVLGLIAKTKQGCDILKCHSWDSVRHSRKHLWPVVPDDVEQLCNELSSVPSTLSLNSESTSSRHNSESESAPSSMFMLEDDRFGSTSTSTFFLDINEDAEPAFYDRPGPIKDKNSFPFFGSSKLVKNRILNSLTLPTKKHRSSSDPKGGKLSSENKTSNRRIRTLTEPSVDLNHSEDFTSSSAQKSLQLEPSFVGNKHLEDAGSTPSIGENDLKFPKSFGTETHRENTSRERLVVEGSASSHIKIRSQSFNTDTTTSGISSMSSSPSRETVAVDPTAMDTDCGSLSTVVSTKTVKTSHYLTPQSNHLSLSKSNSVSLVPPGSSHTLPRRAQSLKAPSIATIKSLADCNFSYTSSRDAFGYATLKRLQQQRMHPSLSHSEALASPAKDVLFTDTITMKANSFESRLTPSRFMKALSYASLDKEDLLSPINHNTLQRSSSVRSMVSSATYGGSDDYIGLALPVDINDIFQIKDVPYFQSKHVPPPDDRGARMFSHDGAGLSSGAGGLVKNSFHLLRQQMSLTEIMNSVHSDASLFLESTEDTGLQEHTDDNCLYCVCIELLGFQPSNQLSSICSHSDLQDIPYSDWCEQTIHNPLEVVPSKFSGISGCSDGASQEEGSASSTKSTELLLGVKTIPDDTPMCRILLRKEVLRLVVNLSSSVSTKCHETGLLTIKEKYPQTFDDICLYSEVSHLLSHCTFRLQCRRFIQELFQDVQFLQMHEEAEAVLAIPPIQPIVDESAES.

Positions 1–789 (MAAIGRGRSL…DKANLHALIQ (789 aa)) are interaction with NBN. Serine 21, serine 35, and serine 265 each carry phosphoserine. Residue lysine 274 forms a Glycyl lysine isopeptide (Lys-Gly) (interchain with G-Cter in ubiquitin) linkage. The interval 521–570 (LKDTEEALLINLRDSQVLQHKENLDWDWNLIGTILKWPNVNLRNYKDEQL) is ribosome-binding domain. Residues asparagine 543, arginine 572, and arginine 576 each coordinate ATP. Low complexity predominate over residues 1021–1043 (TLSLNSESTSSRHNSESESAPSS). Residues 1021 to 1045 (TLSLNSESTSSRHNSESESAPSSMF) are disordered. Residues lysine 1092 and lysine 1095 each carry the N6-acetyllysine modification. Disordered stretches follow at residues 1101-1198 (SLTL…ENTS) and 1218-1247 (SFNT…PTAM). Position 1103 is a phosphothreonine (threonine 1103). N6-acetyllysine is present on residues lysine 1116, lysine 1119, and lysine 1125. Threonine 1135 is subject to Phosphothreonine; by RPS6KB1. Serine 1138 is subject to Phosphoserine. The span at 1147–1158 (FTSSSAQKSLQL) shows a compositional bias: polar residues. Residues serine 1161, serine 1218, and serine 1234 each carry the phosphoserine modification. A compositionally biased stretch (low complexity) spans 1221–1239 (TDTTTSGISSMSSSPSRET). Residue threonine 1270 is modified to Phosphothreonine. 4 positions are modified to phosphoserine: serine 1273, serine 1277, serine 1281, and serine 1283. Threonine 1294 carries the phosphothreonine modification. Serine 1301 and serine 1312 each carry phosphoserine. Threonine 1331 carries the post-translational modification Phosphothreonine. Phosphoserine occurs at positions 1345 and 1352. The residue at position 1375 (threonine 1375) is a Phosphothreonine. Serine 1384 carries the post-translational modification Phosphoserine. At tyrosine 1385 the chain carries Phosphotyrosine. 3 positions are modified to phosphoserine: serine 1387, serine 1395, and serine 1410. The Zn(2+) site is built by histidine 1514, cysteine 1519, and cysteine 1522. Phosphoserine is present on residues serine 1570, serine 1573, serine 1576, and serine 1591. Cysteine 1651 serves as a coordination point for Zn(2+).

It belongs to the RICTOR family. As to quaternary structure, component of the mechanistic target of rapamycin complex 2 (mTORC2), consisting in two heterotretramers composed of MTOR, MLST8, RICTOR and MAPKAP1/SIN1. The mTORC2 core complex associates with PRR5/PROTOR1 and/or PRR5L/PROTOR2. Contrary to mTORC1, mTORC2 does not bind to and is not sensitive to FKBP12-rapamycin. Binds directly to MTOR and PRR5 within the TORC2 complex; interaction with MTOR is enhanced by deubiquitination of RICTOR by USP9X. Interaction with MAPKAP1 is not enhanced by RICTOR deubiquitination by USP9X. Interacts with CCDC28B. Interacts with NBN. Interacts with SIK3. Interacts with NCKAP1L. Interacts with ARMH4 (via cytoplasmic tail); this interaction bridges ARMH4 to the mTORC2 complex and inhibits the mTORC2 kinase activity. Interacts with UBXN2A. Interacts with TSPAN8. Phosphorylated by MTOR; when part of mTORC2. Phosphorylated at Thr-1135 by RPS6KB1 downstream of the mTORC1 complex: phosphorylation of RICTOR inhibits mTORC2 signaling by creating a binding site for 14-3-3 proteins. Phosphorylated at Ser-1234 by GSK3B in response to endoplasmic stress, inhibiting mTORC2 signaling. In terms of processing, ubiquitinated by the SCF(FBXW7) complex, leading to its degradation by the proteasome. Deubiquitinated by USP9X; deubiquitination stabilizes RICTOR and enhances its binding to MTOR, thus promoting mTORC2 complex assembly. Post-translationally, acetylated by EP300/p300 in response to glucose, leading to activate the mTORC2 complex. Acetylation by BLOC1S1/GCN5L1 in response to hypotoxic stress protects RICTOR against ubiquitination and subsequent degradation by the proteasome. As to expression, highest levels in liver and brain with expression also detected in heart, muscle, spleen and kidney (at protein level).

It localises to the cell membrane. Its subcellular location is the endoplasmic reticulum membrane. The protein resides in the lysosome membrane. Its function is as follows. Component of the mechanistic target of rapamycin complex 2 (mTORC2), which transduces signals from growth factors to pathways involved in proliferation, cytoskeletal organization, lipogenesis and anabolic output. In response to growth factors, mTORC2 phosphorylates and activates AGC protein kinase family members, including AKT (AKT1, AKT2 and AKT3), PKC (PRKCA, PRKCB and PRKCE) and SGK1. In contrast to mTORC1, mTORC2 is nutrient-insensitive. Within the mTORC2 complex, RICTOR probably acts as a molecular adapter. RICTOR is responsible for the FKBP12-rapamycin-insensitivity of mTORC2. mTORC2 plays a critical role in AKT1 activation by mediating phosphorylation of different sites depending on the context, such as 'Thr-450', 'Ser-473', 'Ser-477' or 'Thr-479', facilitating the phosphorylation of the activation loop of AKT1 on 'Thr-308' by PDPK1/PDK1 which is a prerequisite for full activation. mTORC2 catalyzes the phosphorylation of SGK1 at 'Ser-422' and of PRKCA on 'Ser-657'. The mTORC2 complex also phosphorylates various proteins involved in insulin signaling, such as FBXW8 and IGF2BP1. mTORC2 acts upstream of Rho GTPases to regulate the actin cytoskeleton, probably by activating one or more Rho-type guanine nucleotide exchange factors. mTORC2 promotes the serum-induced formation of stress-fibers or F-actin. Plays an essential role in embryonic growth and development. In Mus musculus (Mouse), this protein is Rapamycin-insensitive companion of mTOR.